Consider the following 460-residue polypeptide: Wadjet protein JetA (460 aa).

Its function is as follows. Component of antiplasmid transformation system Wadjet type I, composed of JetA, JetB, JetC and JetD. Expression of Wadjet type I in B.subtilis (strain BEST7003) reduces the transformation efficiency of plasmid pHCMC05. This is Wadjet protein JetA from Bacillus cereus (strain Q1).